Consider the following 90-residue polypeptide: Putative transcript Y 12 protein (90 aa).

The polypeptide is Putative transcript Y 12 protein (TTTY12) (Homo sapiens (Human)).